A 347-amino-acid chain; its full sequence is UDP-3-O-acylglucosamine N-acyltransferase (347 aa).

His-248 serves as the catalytic Proton acceptor.

Belongs to the transferase hexapeptide repeat family. LpxD subfamily. Homotrimer.

It catalyses the reaction a UDP-3-O-[(3R)-3-hydroxyacyl]-alpha-D-glucosamine + a (3R)-hydroxyacyl-[ACP] = a UDP-2-N,3-O-bis[(3R)-3-hydroxyacyl]-alpha-D-glucosamine + holo-[ACP] + H(+). Its pathway is bacterial outer membrane biogenesis; LPS lipid A biosynthesis. In terms of biological role, catalyzes the N-acylation of UDP-3-O-acylglucosamine using 3-hydroxyacyl-ACP as the acyl donor. Is involved in the biosynthesis of lipid A, a phosphorylated glycolipid that anchors the lipopolysaccharide to the outer membrane of the cell. The protein is UDP-3-O-acylglucosamine N-acyltransferase of Synechococcus sp. (strain CC9902).